We begin with the raw amino-acid sequence, 490 residues long: Cytochrome P450 2C9 (490 aa).

C435 is a heme binding site.

It belongs to the cytochrome P450 family. Heme is required as a cofactor.

The protein localises to the endoplasmic reticulum membrane. It localises to the microsome membrane. It catalyses the reaction an organic molecule + reduced [NADPH--hemoprotein reductase] + O2 = an alcohol + oxidized [NADPH--hemoprotein reductase] + H2O + H(+). It carries out the reaction (5Z,8Z,11Z,14Z)-eicosatetraenoate + reduced [NADPH--hemoprotein reductase] + O2 = (8R,9S)-epoxy-(5Z,11Z,14Z)-eicosatrienoate + oxidized [NADPH--hemoprotein reductase] + H2O + H(+). The catalysed reaction is (5Z,8Z,11Z,14Z)-eicosatetraenoate + reduced [NADPH--hemoprotein reductase] + O2 = (8S,9R)-epoxy-(5Z,11Z,14Z)-eicosatrienoate + oxidized [NADPH--hemoprotein reductase] + H2O + H(+). The enzyme catalyses (5Z,8Z,11Z,14Z)-eicosatetraenoate + reduced [NADPH--hemoprotein reductase] + O2 = (11R,12S)-epoxy-(5Z,8Z,14Z)-eicosatrienoate + oxidized [NADPH--hemoprotein reductase] + H2O + H(+). It catalyses the reaction (5Z,8Z,11Z,14Z)-eicosatetraenoate + reduced [NADPH--hemoprotein reductase] + O2 = (11S,12R)-epoxy-(5Z,8Z,14Z)-eicosatrienoate + oxidized [NADPH--hemoprotein reductase] + H2O + H(+). It carries out the reaction (5Z,8Z,11Z,14Z)-eicosatetraenoate + reduced [NADPH--hemoprotein reductase] + O2 = (14R,15S)-epoxy-(5Z,8Z,11Z)-eicosatrienoate + oxidized [NADPH--hemoprotein reductase] + H2O + H(+). The catalysed reaction is (5Z,8Z,11Z,14Z)-eicosatetraenoate + reduced [NADPH--hemoprotein reductase] + O2 = (14S,15R)-epoxy-(5Z,8Z,11Z)-eicosatrienoate + oxidized [NADPH--hemoprotein reductase] + H2O + H(+). The enzyme catalyses (5Z,8Z,11Z,14Z,17Z)-eicosapentaenoate + reduced [NADPH--hemoprotein reductase] + O2 = 8,9-epoxy-(5Z,11Z,14Z,17Z)-eicosatetraenoate + oxidized [NADPH--hemoprotein reductase] + H2O + H(+). It catalyses the reaction (5Z,8Z,11Z,14Z,17Z)-eicosapentaenoate + reduced [NADPH--hemoprotein reductase] + O2 = 11,12-epoxy-(5Z,8Z,14Z,17Z)-eicosatetraenoate + oxidized [NADPH--hemoprotein reductase] + H2O + H(+). It carries out the reaction (5Z,8Z,11Z,14Z,17Z)-eicosapentaenoate + reduced [NADPH--hemoprotein reductase] + O2 = 14,15-epoxy-(5Z,8Z,11Z,17Z)-eicosatetraenoate + oxidized [NADPH--hemoprotein reductase] + H2O + H(+). The catalysed reaction is (5Z,8Z,11Z,14Z,17Z)-eicosapentaenoate + reduced [NADPH--hemoprotein reductase] + O2 = (17R,18S)-epoxy-(5Z,8Z,11Z,14Z)-eicosatetraenoate + oxidized [NADPH--hemoprotein reductase] + H2O + H(+). The enzyme catalyses cholesterol + reduced [NADPH--hemoprotein reductase] + O2 = 25-hydroxycholesterol + oxidized [NADPH--hemoprotein reductase] + H2O + H(+). It catalyses the reaction 17beta-estradiol + reduced [NADPH--hemoprotein reductase] + O2 = 2-hydroxy-17beta-estradiol + oxidized [NADPH--hemoprotein reductase] + H2O + H(+). It carries out the reaction estrone + reduced [NADPH--hemoprotein reductase] + O2 = 2-hydroxyestrone + oxidized [NADPH--hemoprotein reductase] + H2O + H(+). The catalysed reaction is (5Z,8Z,11Z,14Z)-eicosatetraenoate + reduced [NADPH--hemoprotein reductase] + O2 = (11R)-hydroxy-(5Z,8Z,12E,14Z)-eicosatetraenoate + oxidized [NADPH--hemoprotein reductase] + H2O + H(+). The enzyme catalyses (5Z,8Z,11Z,14Z)-eicosatetraenoate + reduced [NADPH--hemoprotein reductase] + O2 = (12R)-hydroxy-(5Z,8Z,10E,14Z)-eicosatetraenoate + oxidized [NADPH--hemoprotein reductase] + H2O + H(+). It catalyses the reaction (5Z,8Z,11Z,14Z)-eicosatetraenoate + reduced [NADPH--hemoprotein reductase] + O2 = (15R)-hydroxy-(5Z,8Z,11Z,13E)-eicosatetraenoate + oxidized [NADPH--hemoprotein reductase] + H2O + H(+). It carries out the reaction (5Z,8Z,11Z,14Z)-eicosatetraenoate + reduced [NADPH--hemoprotein reductase] + O2 = 10-hydroxy-(5Z,8Z,11Z,14Z)-eicosatetraenoate + oxidized [NADPH--hemoprotein reductase] + H2O + H(+). The catalysed reaction is (9Z,12Z)-octadecadienoate + reduced [NADPH--hemoprotein reductase] + O2 = (13R)-hydroxy-(9Z,11E)-octadecadienoate + oxidized [NADPH--hemoprotein reductase] + H2O + H(+). The enzyme catalyses (9Z,12Z)-octadecadienoate + reduced [NADPH--hemoprotein reductase] + O2 = (9R)-hydroxy-(10E,12Z)-octadecadienoate + oxidized [NADPH--hemoprotein reductase] + H2O + H(+). It catalyses the reaction (5Z,8Z,11Z,14Z)-eicosatetraenoate + reduced [NADPH--hemoprotein reductase] + O2 = 19-hydroxy-(5Z,8Z,11Z,14Z)-eicosatetraenoate + oxidized [NADPH--hemoprotein reductase] + H2O + H(+). It carries out the reaction (5Z,8Z,11Z,14Z)-eicosatetraenoate + reduced [NADPH--hemoprotein reductase] + O2 = 13(S)-hydroxy-(5Z,8Z,11Z,14Z)-eicosatetraenoate + oxidized [NADPH--hemoprotein reductase] + H2O + H(+). The catalysed reaction is (5Z,8Z,11Z,14Z)-eicosatetraenoate + reduced [NADPH--hemoprotein reductase] + O2 = 14,15-epoxy-(5Z,8Z,11Z)-eicosatrienoate + oxidized [NADPH--hemoprotein reductase] + H2O + H(+). The enzyme catalyses (5Z,8Z,11Z,14Z)-eicosatetraenoate + reduced [NADPH--hemoprotein reductase] + O2 = 11,12-epoxy-(5Z,8Z,14Z)-eicosatrienoate + oxidized [NADPH--hemoprotein reductase] + H2O + H(+). It catalyses the reaction (5Z,8Z,11Z,14Z)-eicosatetraenoate + reduced [NADPH--hemoprotein reductase] + O2 = 13-hydroxy-(5Z,8Z,11Z,14Z)-eicosatetraenoate + oxidized [NADPH--hemoprotein reductase] + H2O + H(+). It carries out the reaction (4R)-limonene + reduced [NADPH--hemoprotein reductase] + O2 = (1R,5S)-carveol + oxidized [NADPH--hemoprotein reductase] + H2O + H(+). The catalysed reaction is (4S)-limonene + reduced [NADPH--hemoprotein reductase] + O2 = (1S,5R)-carveol + oxidized [NADPH--hemoprotein reductase] + H2O + H(+). The enzyme catalyses (4S)-limonene + reduced [NADPH--hemoprotein reductase] + O2 = (4S)-perillyl alcohol + oxidized [NADPH--hemoprotein reductase] + H2O + H(+). The protein operates within lipid metabolism; arachidonate metabolism. Its pathway is steroid metabolism; cholesterol metabolism. It participates in terpene metabolism; (4R)-limonene degradation. A cytochrome P450 monooxygenase involved in the metabolism of various endogenous substrates, including fatty acids and steroids. Mechanistically, uses molecular oxygen inserting one oxygen atom into a substrate, and reducing the second into a water molecule, with two electrons provided by NADPH via cytochrome P450 reductase (NADPH--hemoprotein reductase). Catalyzes the epoxidation of double bonds of polyunsaturated fatty acids (PUFA). Catalyzes the hydroxylation of carbon-hydrogen bonds. Metabolizes cholesterol toward 25-hydroxycholesterol, a physiological regulator of cellular cholesterol homeostasis. Exhibits low catalytic activity for the formation of catechol estrogens from 17beta-estradiol (E2) and estrone (E1), namely 2-hydroxy E1 and E2. Catalyzes bisallylic hydroxylation and hydroxylation with double-bond migration of polyunsaturated fatty acids (PUFA). Also metabolizes plant monoterpenes such as limonene. Oxygenates (R)- and (S)-limonene to produce carveol and perillyl alcohol. Contributes to the wide pharmacokinetics variability of the metabolism of drugs such as S-warfarin, diclofenac, phenytoin, tolbutamide and losartan. The sequence is that of Cytochrome P450 2C9 from Homo sapiens (Human).